The sequence spans 74 residues: MDSEVLRDGRILDLIDDAWREDKLPYEDVTIPLNELPEPEQDNGGATESVKEQEMKWADLALQYLHENISSSGS.

This sequence belongs to the APC13 family. The APC/C is composed of at least 12 subunits.

It is found in the nucleus. The protein operates within protein modification; protein ubiquitination. Its function is as follows. Component of the anaphase promoting complex/cyclosome (APC/C), a cell cycle-regulated E3 ubiquitin ligase that controls progression through mitosis and the G1 phase of the cell cycle. The APC/C complex acts by mediating ubiquitination and subsequent degradation of target proteins: it mainly mediates the formation of 'Lys-11'-linked polyubiquitin chains and, to a lower extent, the formation of 'Lys-48'- and 'Lys-63'-linked polyubiquitin chains. The APC/C complex catalyzes assembly of branched 'Lys-11'-/'Lys-48'-linked branched ubiquitin chains on target proteins. In Xenopus tropicalis (Western clawed frog), this protein is Anaphase-promoting complex subunit 13 (anapc13).